Consider the following 434-residue polypeptide: Cysteine proteinase 6 (434 aa).

The first 19 residues, 1-19, serve as a signal peptide directing secretion; sequence MKVLSALCVLLVSVATAKQ. The propeptide at 20-113 is activation peptide; sequence QLSELQYRNA…SEKVFGGVQA (94 aa). 2 cysteine pairs are disulfide-bonded: C133–C178 and C169–C211. The active site involves C136. N-linked (GlcNAc...) asparagine glycosylation occurs at N227. C269 and C416 are disulfide-bonded. H276 is an active-site residue. The interval 285 to 384 is disordered; sequence SGSSGSQSQS…GGNSNSGDYP (100 aa). Low complexity predominate over residues 288 to 347; it reads SGSQSQSAGSQSQSSNNNWSESSQSQDSNSWSQSSQSQSSQDSNSWSQSSQSQGSNSFTG. A glycan (N-linked (GlcNAc...) asparagine) is linked at N305. The span at 348–358 shows a compositional bias: gly residues; the sequence is AGTGSGSGSVS. Over residues 359–381 the composition is skewed to low complexity; the sequence is GSGSASGSSSFSGSSNGGNSNSG. N394 is an active-site residue.

Belongs to the peptidase C1 family.

Its subcellular location is the lysosome. The polypeptide is Cysteine proteinase 6 (cprF) (Dictyostelium discoideum (Social amoeba)).